Reading from the N-terminus, the 312-residue chain is RNA pseudouridylate synthase domain-containing protein 1 (312 aa).

N-acetylmethionine is present on Met-1. Residue Asp-67 is part of the active site. The segment at 256–298 (ATPDPDPEDRGPRPGSPSALLPGPGRPPPPPTKPPETEAQRGP) is disordered. Pro residues predominate over residues 279–289 (PGRPPPPPTKP).

This sequence belongs to the pseudouridine synthase RluA family.

This chain is RNA pseudouridylate synthase domain-containing protein 1 (RPUSD1), found in Homo sapiens (Human).